We begin with the raw amino-acid sequence, 211 residues long: MTTLTRQDLNFGQVVADVLSEFLEVAVHLILYVREVYPVGIFQKRKKYNVPVQMSCHPELNQYIQDTLHCVKPLLEKNDVEKVVVVILDKEHRPVEKFVFEITQPPLLSINSDSLLSHVEQLLRAFILKISVCDAVLDHNPPGCTFTVLVHTREAATRNMEKIQVIKDFPWILADEQDVHMHDPRLIPLKTMTSDILKMQLYVEERAHKNS.

In terms of domain architecture, HORMA spans Gln-13–Val-203. The mediates interaction with REV1 and REV3L and homodimerization stretch occupies residues Glu-21–Ala-155.

In terms of assembly, homooligomer. Heterodimer with REV3L. This dimer forms the minimal DNA polymerase zeta complex (Pol-zeta2), with REV3L bearing DNA polymerase catalytic activity, although its activity is very low in this context. Component of the tetrameric Pol-zeta complex (Pol-zeta4), which consists of REV3L, MAD2L2, POLD2 and POLD3; Pol-zeta4 is the fully active form of DNA polymerase zeta. Component of the shieldin complex, consisting of SHLD1, SHLD2, SHLD3 and MAD2L2/REV7. Within the complex, SHLD2 forms a scaffold which interacts with a SHLD3-MAD2L2 subcomplex via its N-terminus, and with SHLD1 via its C-terminus. Interacts with REV1. Interacts with ADAM9. Interacts with CHAMP1. Interacts with FZR1 (in complex with the anaphase promoting complex APC). May interact with CDC20. Interacts with RAN. Interacts with ELK1; the interaction is direct and recruits MAD2L2 to ELK1-specific promoters. May interact with the JNK kinases MAPK8 and/or MAPK9 to stimulate ELK1 phosphorylation and transcriptional activity upon DNA damage. Interacts with TCF7L2; prevents its binding to promoters and negatively modulates its transcriptional activity. Interacts with YY1AP1. Interacts with PRCC; the interaction is direct. Interacts with POGZ. Interacts with ASTE1.

The protein localises to the nucleus. Its subcellular location is the cytoplasm. The protein resides in the cytoskeleton. It is found in the spindle. Adapter protein able to interact with different proteins and involved in different biological processes. Mediates the interaction between the error-prone DNA polymerase zeta catalytic subunit REV3L and the inserter polymerase REV1, thereby mediating the second polymerase switching in translesion DNA synthesis. Translesion DNA synthesis releases the replication blockade of replicative polymerases, stalled in presence of DNA lesions. Component of the shieldin complex, which plays an important role in repair of DNA double-stranded breaks (DSBs). During G1 and S phase of the cell cycle, the complex functions downstream of TP53BP1 to promote non-homologous end joining (NHEJ) and suppress DNA end resection. Mediates various NHEJ-dependent processes including immunoglobulin class-switch recombination, and fusion of unprotected telomeres. May also regulate another aspect of cellular response to DNA damage through regulation of the JNK-mediated phosphorylation and activation of the transcriptional activator ELK1. Inhibits the FZR1- and probably CDC20-mediated activation of the anaphase promoting complex APC thereby regulating progression through the cell cycle. Regulates TCF7L2-mediated gene transcription and may play a role in epithelial-mesenchymal transdifferentiation. The chain is Mitotic spindle assembly checkpoint protein MAD2B (Mad2l2) from Rattus norvegicus (Rat).